The primary structure comprises 207 residues: V-type ATP synthase subunit D (207 aa).

The protein belongs to the V-ATPase D subunit family.

Functionally, produces ATP from ADP in the presence of a proton gradient across the membrane. The sequence is that of V-type ATP synthase subunit D from Streptococcus gordonii (strain Challis / ATCC 35105 / BCRC 15272 / CH1 / DL1 / V288).